Here is a 132-residue protein sequence, read N- to C-terminus: Glycine cleavage system H protein (132 aa).

The region spanning Thr-24–Arg-107 is the Lipoyl-binding domain. The residue at position 65 (Lys-65) is an N6-lipoyllysine.

The protein belongs to the GcvH family. In terms of assembly, the glycine cleavage system is composed of four proteins: P, T, L and H. (R)-lipoate is required as a cofactor.

In terms of biological role, the glycine cleavage system catalyzes the degradation of glycine. The H protein shuttles the methylamine group of glycine from the P protein to the T protein. This chain is Glycine cleavage system H protein, found in Synechocystis sp. (strain ATCC 27184 / PCC 6803 / Kazusa).